A 207-amino-acid chain; its full sequence is Large ribosomal subunit protein uL4 (207 aa).

The segment at 44 to 78 (LRQGTHKTKTRSEVRGGGRKPWRQKGTGRARQGSI) is disordered. The span at 60 to 71 (GGRKPWRQKGTG) shows a compositional bias: basic residues.

It belongs to the universal ribosomal protein uL4 family. Part of the 50S ribosomal subunit.

In terms of biological role, one of the primary rRNA binding proteins, this protein initially binds near the 5'-end of the 23S rRNA. It is important during the early stages of 50S assembly. It makes multiple contacts with different domains of the 23S rRNA in the assembled 50S subunit and ribosome. Functionally, forms part of the polypeptide exit tunnel. The protein is Large ribosomal subunit protein uL4 of Halalkalibacterium halodurans (strain ATCC BAA-125 / DSM 18197 / FERM 7344 / JCM 9153 / C-125) (Bacillus halodurans).